Here is a 428-residue protein sequence, read N- to C-terminus: Beta-1,3-galactosyl-O-glycosyl-glycoprotein beta-1,6-N-acetylglucosaminyltransferase 4 (428 aa).

The Cytoplasmic portion of the chain corresponds to 1 to 12; the sequence is MRRCAVLHRLRC. A helical; Signal-anchor for type II membrane protein membrane pass occupies residues 13-30; it reads KFYVFVVSLFVVVKLVYL. Over 31–428 the chain is Lumenal; it reads KISMDNSIYI…QLQQCLRRVS (398 aa). A glycan (N-linked (GlcNAc...) asparagine) is linked at N59. 4 cysteine pairs are disulfide-bonded: C60/C214, C148/C369, C169/C196, and C378/C410.

It belongs to the glycosyltransferase 14 family.

The protein localises to the golgi apparatus membrane. The catalysed reaction is a 3-O-[beta-D-galactosyl-(1-&gt;3)-N-acetyl-alpha-D-galactosaminyl]-L-seryl-[protein] + UDP-N-acetyl-alpha-D-glucosamine = 3-O-{beta-D-galactosyl-(1-&gt;3)-[N-acetyl-beta-D-glucosaminyl-(1-&gt;6)]-N-acetyl-alpha-D-galactosaminyl}-L-seryl-[protein] + UDP + H(+). It catalyses the reaction a 3-O-[beta-D-galactosyl-(1-&gt;3)-N-acetyl-alpha-D-galactosaminyl]-L-threonyl-[protein] + UDP-N-acetyl-alpha-D-glucosamine = a 3-O-{beta-D-galactosyl-(1-&gt;3)-[N-acetyl-beta-D-glucosaminyl-(1-&gt;6)]-N-acetyl-alpha-D-galactosaminyl}-L-threonyl-[protein] + UDP + H(+). It functions in the pathway protein modification; protein glycosylation. In terms of biological role, glycosyltransferase that mediates core 2 O-glycan branching, an important step in mucin-type biosynthesis. The polypeptide is Beta-1,3-galactosyl-O-glycosyl-glycoprotein beta-1,6-N-acetylglucosaminyltransferase 4 (gcnt4) (Danio rerio (Zebrafish)).